The following is a 171-amino-acid chain: dCTP pyrophosphatase (171 aa).

It carries out the reaction dCTP + H2O = dCMP + diphosphate + H(+). This chain is dCTP pyrophosphatase (56), found in Enterobacteria phage T4 (Bacteriophage T4).